The primary structure comprises 430 residues: Zinc finger CCCH domain-containing protein 48 (430 aa).

2 disordered regions span residues 1–27 and 56–90; these read MDLDMNGGNKRVFQRLGGGSNRPTTDS and GSGPVAASSNKRVADESGFAGPSHRRGPGFSGTAN. Residues 26–52 form a C3H1-type 1 zinc finger; that stretch reads DSNQKVCFHWRAGRCNRYPCPYLHREL. Residues 102-129 form a C3H1-type 2 zinc finger; sequence TKTEKLCKFWVDGNCPYGDKCRYLHCWS. WD repeat units follow at residues 142–183, 221–258, 265–304, 306–342, 345–389, and 391–429; these read GHQK…GVLN, GPVGQVYSLVVGTDLLFAGTQDGSILVWRYNSTTSCFD, GHTLAVVSLYVGANRLYSGAMDNSIKVWSLDNLQCIQTLT, HTSVVMSLICWDQFLLSCSLDNTVKIWAATEGGNLEV, THKE…ERGK, and LAKQEIRSIQIGPGGIFFTGDGSGQVKVWKWSTESTPIL.

The chain is Zinc finger CCCH domain-containing protein 48 (ZFWD1) from Arabidopsis thaliana (Mouse-ear cress).